Here is a 318-residue protein sequence, read N- to C-terminus: Aspartate carbamoyltransferase catalytic subunit (318 aa).

Residues R64 and T65 each contribute to the carbamoyl phosphate site. L-aspartate is bound at residue K92. Carbamoyl phosphate-binding residues include R114, H142, and Q145. L-aspartate contacts are provided by R175 and R229. 2 residues coordinate carbamoyl phosphate: G270 and P271.

The protein belongs to the aspartate/ornithine carbamoyltransferase superfamily. ATCase family. In terms of assembly, heterododecamer (2C3:3R2) of six catalytic PyrB chains organized as two trimers (C3), and six regulatory PyrI chains organized as three dimers (R2).

The enzyme catalyses carbamoyl phosphate + L-aspartate = N-carbamoyl-L-aspartate + phosphate + H(+). The protein operates within pyrimidine metabolism; UMP biosynthesis via de novo pathway; (S)-dihydroorotate from bicarbonate: step 2/3. Catalyzes the condensation of carbamoyl phosphate and aspartate to form carbamoyl aspartate and inorganic phosphate, the committed step in the de novo pyrimidine nucleotide biosynthesis pathway. This is Aspartate carbamoyltransferase catalytic subunit from Rhodospirillum centenum (strain ATCC 51521 / SW).